Consider the following 299-residue polypeptide: Serpentine receptor class gamma-30 (299 aa).

7 helical membrane passes run 18 to 38 (GIQF…IKVL), 59 to 79 (ILSV…NYIP), 98 to 118 (ILFI…FMVV), 137 to 157 (IIPH…WTAF), 189 to 209 (IISS…MLCI), 223 to 243 (LTAS…MNIY), and 260 to 280 (ALTA…MLCL).

Belongs to the nematode receptor-like protein srg family.

Its subcellular location is the membrane. This Caenorhabditis elegans protein is Serpentine receptor class gamma-30 (srg-30).